We begin with the raw amino-acid sequence, 608 residues long: Probable adenylate kinase 5, chloroplastic (608 aa).

Positions 1–20 (MAASSSSSSPAAASAPFAAP) are enriched in low complexity. A disordered region spans residues 1-44 (MAASSSSSSPAAASAPFAAPGPHRRPGLALRPSPPTPPSSSLSC). The N-terminal 75 residues, 1–75 (MAASSSSSSP…GPRGMGLRCR (75 aa)), are a transit peptide targeting the chloroplast. 99 to 104 (ASGKGT) is an ATP binding site. An NMP region spans residues 119 to 148 (STGDLLRAEVSSGTEIGKKAKEYMDNGMLV). AMP contacts are provided by residues Thr120, Arg125, 146–148 (MLV), 175–178 (GYPR), and Gln182. Residues Arg209, Arg213, and 222-223 (IY) contribute to the ATP site. Residues 212-245 (GRRLDPETGKIYHIKNFPPENDEVSARLVTRSDD) are LID. AMP-binding residues include Arg242 and Arg253.

This sequence belongs to the adenylate kinase family.

The protein localises to the plastid. It localises to the chloroplast. The enzyme catalyses AMP + ATP = 2 ADP. Its function is as follows. Catalyzes the reversible transfer of the terminal phosphate group between ATP and AMP. Plays an important role in cellular energy homeostasis and in adenine nucleotide metabolism. This chain is Probable adenylate kinase 5, chloroplastic, found in Oryza sativa subsp. japonica (Rice).